Consider the following 432-residue polypeptide: E3 ubiquitin-protein ligase ATL42 (432 aa).

The first 18 residues, 1–18, serve as a signal peptide directing secretion; sequence MYQIFFFFLPLLHSYASA. Residues 37–57 form a helical membrane-spanning segment; it reads LAVVTGVLAIMFALTFVLLVY. The segment at 123-165 adopts an RING-type; atypical zinc-finger fold; it reads CSVCLSKFESVEILRLLPKCRHAFHIGCIDQWLEQHATCPLCR.

The protein belongs to the RING-type zinc finger family. ATL subfamily.

The protein localises to the membrane. It catalyses the reaction S-ubiquitinyl-[E2 ubiquitin-conjugating enzyme]-L-cysteine + [acceptor protein]-L-lysine = [E2 ubiquitin-conjugating enzyme]-L-cysteine + N(6)-ubiquitinyl-[acceptor protein]-L-lysine.. It functions in the pathway protein modification; protein ubiquitination. E3 ubiquitin-protein ligase able to catalyze polyubiquitination with ubiquitin-conjugating enzyme E2 UBC8 in vitro. This chain is E3 ubiquitin-protein ligase ATL42 (ATL42), found in Arabidopsis thaliana (Mouse-ear cress).